Reading from the N-terminus, the 311-residue chain is Fructose-1,6-bisphosphatase class 1 (311 aa).

Glutamate 90, aspartate 110, leucine 112, and aspartate 113 together coordinate Mg(2+). Substrate-binding positions include 113–116, tyrosine 221, and lysine 251; that span reads DGSS. Glutamate 257 provides a ligand contact to Mg(2+).

It belongs to the FBPase class 1 family. As to quaternary structure, homotetramer. The cofactor is Mg(2+).

It is found in the cytoplasm. The catalysed reaction is beta-D-fructose 1,6-bisphosphate + H2O = beta-D-fructose 6-phosphate + phosphate. It participates in carbohydrate biosynthesis; gluconeogenesis. This chain is Fructose-1,6-bisphosphatase class 1, found in Methanospirillum hungatei JF-1 (strain ATCC 27890 / DSM 864 / NBRC 100397 / JF-1).